The following is a 152-amino-acid chain: Protein SprT-like (152 aa).

Residues 7–148 (QRLVEEVSLQ…GKCKGKLILI (142 aa)) form the SprT-like domain. His67 is a binding site for Zn(2+). Residue Glu68 is part of the active site. Position 71 (His71) interacts with Zn(2+).

Belongs to the SprT family. It depends on Zn(2+) as a cofactor.

It localises to the cytoplasm. In Bacillus thuringiensis subsp. konkukian (strain 97-27), this protein is Protein SprT-like.